The following is a 122-amino-acid chain: MARISGIDLPKNKRIEIALTYIYGVGLSSSQKILEKANIDANKRCKDLDDNEVSLIRSIIDENYPVEGAAKRVESMNIKRLMEINCIRGKRHRVGLPLRGQRTRTNARTRRGAKKTVAGKKK.

Residues 102 to 122 (RTRTNARTRRGAKKTVAGKKK) are disordered.

It belongs to the universal ribosomal protein uS13 family. As to quaternary structure, part of the 30S ribosomal subunit.

The protein resides in the plastid. It localises to the chloroplast. Located at the top of the head of the 30S subunit, it contacts several helices of the 16S rRNA. The sequence is that of Small ribosomal subunit protein uS13c from Guillardia theta (Cryptophyte).